Here is a 378-residue protein sequence, read N- to C-terminus: Erythronate-4-phosphate dehydrogenase (378 aa).

2 residues coordinate substrate: serine 45 and threonine 66. Residues aspartate 142 and threonine 169 each contribute to the NAD(+) site. Residue arginine 202 is part of the active site. Aspartate 226 contributes to the NAD(+) binding site. Glutamate 231 is an active-site residue. Histidine 248 acts as the Proton donor in catalysis. Glycine 251 provides a ligand contact to NAD(+). Residue tyrosine 252 coordinates substrate.

It belongs to the D-isomer specific 2-hydroxyacid dehydrogenase family. PdxB subfamily. As to quaternary structure, homodimer.

The protein resides in the cytoplasm. The enzyme catalyses 4-phospho-D-erythronate + NAD(+) = (R)-3-hydroxy-2-oxo-4-phosphooxybutanoate + NADH + H(+). The protein operates within cofactor biosynthesis; pyridoxine 5'-phosphate biosynthesis; pyridoxine 5'-phosphate from D-erythrose 4-phosphate: step 2/5. Catalyzes the oxidation of erythronate-4-phosphate to 3-hydroxy-2-oxo-4-phosphonooxybutanoate. The sequence is that of Erythronate-4-phosphate dehydrogenase from Cellvibrio japonicus (strain Ueda107) (Pseudomonas fluorescens subsp. cellulosa).